The following is a 437-amino-acid chain: ATP-dependent protease ATPase subunit HslU (437 aa).

ATP is bound by residues V18, 60–65 (GCGKTE), D250, E315, and R387.

This sequence belongs to the ClpX chaperone family. HslU subfamily. A double ring-shaped homohexamer of HslV is capped on each side by a ring-shaped HslU homohexamer. The assembly of the HslU/HslV complex is dependent on binding of ATP.

It is found in the cytoplasm. Its function is as follows. ATPase subunit of a proteasome-like degradation complex; this subunit has chaperone activity. The binding of ATP and its subsequent hydrolysis by HslU are essential for unfolding of protein substrates subsequently hydrolyzed by HslV. HslU recognizes the N-terminal part of its protein substrates and unfolds these before they are guided to HslV for hydrolysis. In Methylorubrum populi (strain ATCC BAA-705 / NCIMB 13946 / BJ001) (Methylobacterium populi), this protein is ATP-dependent protease ATPase subunit HslU.